The chain runs to 155 residues: SsrA-binding protein (155 aa).

It belongs to the SmpB family.

It is found in the cytoplasm. Functionally, required for rescue of stalled ribosomes mediated by trans-translation. Binds to transfer-messenger RNA (tmRNA), required for stable association of tmRNA with ribosomes. tmRNA and SmpB together mimic tRNA shape, replacing the anticodon stem-loop with SmpB. tmRNA is encoded by the ssrA gene; the 2 termini fold to resemble tRNA(Ala) and it encodes a 'tag peptide', a short internal open reading frame. During trans-translation Ala-aminoacylated tmRNA acts like a tRNA, entering the A-site of stalled ribosomes, displacing the stalled mRNA. The ribosome then switches to translate the ORF on the tmRNA; the nascent peptide is terminated with the 'tag peptide' encoded by the tmRNA and targeted for degradation. The ribosome is freed to recommence translation, which seems to be the essential function of trans-translation. The sequence is that of SsrA-binding protein from Geobacillus sp. (strain WCH70).